A 414-amino-acid chain; its full sequence is Esterase FrsA (414 aa).

Belongs to the FrsA family.

The enzyme catalyses a carboxylic ester + H2O = an alcohol + a carboxylate + H(+). In terms of biological role, catalyzes the hydrolysis of esters. The sequence is that of Esterase FrsA from Klebsiella pneumoniae (strain 342).